A 228-amino-acid polypeptide reads, in one-letter code: Lipoprotein-releasing system ATP-binding protein LolD (228 aa).

In terms of domain architecture, ABC transporter spans 6-228; it reads IKCINLNKSY…ENNQIFNYES (223 aa). ATP is bound at residue 42–49; that stretch reads GKSGSGKT.

It belongs to the ABC transporter superfamily. Lipoprotein translocase (TC 3.A.1.125) family.

The protein resides in the cell inner membrane. In terms of biological role, usually LolD forms an ABC transporter complex with LolC and LolE involved in the translocation of lipoprotein, in an ATP-dependent manner. However, LolE is certainly not functional as it is frameshifted. This chain is Lipoprotein-releasing system ATP-binding protein LolD, found in Buchnera aphidicola subsp. Acyrthosiphon pisum (strain APS) (Acyrthosiphon pisum symbiotic bacterium).